Reading from the N-terminus, the 400-residue chain is Deoxyguanosinetriphosphate triphosphohydrolase-like protein (400 aa).

The HD domain maps to arginine 73 to asparagine 215.

The protein belongs to the dGTPase family. Type 2 subfamily.

In Bartonella henselae (strain ATCC 49882 / DSM 28221 / CCUG 30454 / Houston 1) (Rochalimaea henselae), this protein is Deoxyguanosinetriphosphate triphosphohydrolase-like protein.